A 427-amino-acid chain; its full sequence is 3-phosphoshikimate 1-carboxyvinyltransferase (427 aa).

Residues Lys22, Ser23, and Arg27 each contribute to the 3-phosphoshikimate site. Position 22 (Lys22) interacts with phosphoenolpyruvate. Residues Gly96 and Arg124 each coordinate phosphoenolpyruvate. Ser169, Ser170, Gln171, Ser197, Asp313, Asn336, and Lys340 together coordinate 3-phosphoshikimate. Gln171 is a binding site for phosphoenolpyruvate. Asp313 functions as the Proton acceptor in the catalytic mechanism. Positions 344, 386, and 411 each coordinate phosphoenolpyruvate.

Belongs to the EPSP synthase family. In terms of assembly, monomer.

It localises to the cytoplasm. The enzyme catalyses 3-phosphoshikimate + phosphoenolpyruvate = 5-O-(1-carboxyvinyl)-3-phosphoshikimate + phosphate. Its pathway is metabolic intermediate biosynthesis; chorismate biosynthesis; chorismate from D-erythrose 4-phosphate and phosphoenolpyruvate: step 6/7. In terms of biological role, catalyzes the transfer of the enolpyruvyl moiety of phosphoenolpyruvate (PEP) to the 5-hydroxyl of shikimate-3-phosphate (S3P) to produce enolpyruvyl shikimate-3-phosphate and inorganic phosphate. In Escherichia coli O1:K1 / APEC, this protein is 3-phosphoshikimate 1-carboxyvinyltransferase.